The sequence spans 172 residues: MLTEVMEVWHGLVIAVVSLFLQACFLTAINYLLSRHMAHKSEQILKAASLQVPRPSPGHHHPPAVKEMKETQTERDIPMSDSLYRHDSDTPSDSLDSSCSSPPACQATEDVDYTQVVFSDPGELKNDSPLDYENIKEITDYVNVNPERHKPSFWYFVNPALSEPAEYDQVAM.

A helical transmembrane segment spans residues 9 to 29 (WHGLVIAVVSLFLQACFLTAI). The disordered stretch occupies residues 52–106 (VPRPSPGHHHPPAVKEMKETQTERDIPMSDSLYRHDSDTPSDSLDSSCSSPPACQ). The span at 64–89 (AVKEMKETQTERDIPMSDSLYRHDSD) shows a compositional bias: basic and acidic residues. The span at 91–103 (PSDSLDSSCSSPP) shows a compositional bias: low complexity. Residues Y132 and Y141 each carry the phosphotyrosine modification.

As to quaternary structure, interacts with EPOR; this interaction occurs in a erythropoietin (EPO)-dependent manner. Interacts with JAK2; this interaction occurs in a erythropoietin (EPO)-dependent manner. Interacts (via tyrosine-phosphorylated form) with GRB2. Phosphorylated. Phosphorylation on Tyr-132 and Tyr-141 occurs in a erythropoietin (EPO)-dependent manner. As to expression, expressed in the proerythroblasts (at protein level). Expressed strongly in the kidney. Expressed weakly in the pancreas, liver and lung. Expressed strongly in erythroid progenitor cells (EPCs). Expressed weakly in T-cells and neutrophils.

The protein localises to the cell membrane. Functionally, acts as a signaling transduction factor of the EPO-EPOR signaling pathway promoting erythroid cell differentiation. This chain is Regulator of hemoglobinization and erythroid cell expansion protein, found in Homo sapiens (Human).